We begin with the raw amino-acid sequence, 215 residues long: Soluble inorganic pyrophosphatase (215 aa).

Residues 1–21 (MSQEDSTSAAAAQQPTSRPAP) are compositionally biased toward low complexity. The disordered stretch occupies residues 1-24 (MSQEDSTSAAAAQQPTSRPAPKLN). Mg(2+) is bound by residues D103, D108, and D140.

Belongs to the PPase family. Mg(2+) is required as a cofactor. In terms of tissue distribution, expressed in metabolically active tissue such as root, shoot, embryo and aleurone.

It is found in the cytoplasm. The enzyme catalyses diphosphate + H2O = 2 phosphate + H(+). Its function is as follows. May play a role in germination. This Hordeum vulgare subsp. vulgare (Domesticated barley) protein is Soluble inorganic pyrophosphatase (IPP).